The following is a 148-amino-acid chain: Holo-[acyl-carrier-protein] synthase (148 aa).

Mg(2+) contacts are provided by Asp8 and Glu57.

It belongs to the P-Pant transferase superfamily. AcpS family. Mg(2+) serves as cofactor.

The protein resides in the cytoplasm. It catalyses the reaction apo-[ACP] + CoA = holo-[ACP] + adenosine 3',5'-bisphosphate + H(+). In terms of biological role, transfers the 4'-phosphopantetheine moiety from coenzyme A to a Ser of acyl-carrier-protein. This chain is Holo-[acyl-carrier-protein] synthase, found in Ruegeria pomeroyi (strain ATCC 700808 / DSM 15171 / DSS-3) (Silicibacter pomeroyi).